A 43-amino-acid polypeptide reads, in one-letter code: Photosystem II reaction center protein Y (43 aa).

A helical membrane pass occupies residues 8–26 (LFLVVAPILAAVSWAAFNI).

Belongs to the PsbY family. As to quaternary structure, PSII is composed of 1 copy each of membrane proteins PsbA, PsbB, PsbC, PsbD, PsbE, PsbF, PsbH, PsbI, PsbJ, PsbK, PsbL, PsbM, PsbT, PsbX, PsbY, PsbZ, Psb30/Ycf12, peripheral proteins PsbO, CyanoQ (PsbQ), PsbU, PsbV and a large number of cofactors. It forms dimeric complexes.

The protein resides in the cellular thylakoid membrane. Its function is as follows. Loosely associated component of the core of photosystem II (PSII), it is not always seen in crystals. PSII is a light-driven water plastoquinone oxidoreductase, using light energy to abstract electrons from H(2)O, generating a proton gradient subsequently used for ATP formation. This Parasynechococcus marenigrum (strain WH8102) protein is Photosystem II reaction center protein Y.